Consider the following 83-residue polypeptide: Exodeoxyribonuclease 7 small subunit (83 aa).

Belongs to the XseB family. As to quaternary structure, heterooligomer composed of large and small subunits.

The protein localises to the cytoplasm. It carries out the reaction Exonucleolytic cleavage in either 5'- to 3'- or 3'- to 5'-direction to yield nucleoside 5'-phosphates.. Functionally, bidirectionally degrades single-stranded DNA into large acid-insoluble oligonucleotides, which are then degraded further into small acid-soluble oligonucleotides. The polypeptide is Exodeoxyribonuclease 7 small subunit (Rhizobium rhizogenes (strain K84 / ATCC BAA-868) (Agrobacterium radiobacter)).